The chain runs to 503 residues: Arabinose import ATP-binding protein AraG 1 (503 aa).

2 consecutive ABC transporter domains span residues 5-240 and 251-497; these read LRFD…MVGR and RALG…LPQT. 37–44 provides a ligand contact to ATP; the sequence is GENGAGKS.

It belongs to the ABC transporter superfamily. Arabinose importer (TC 3.A.1.2.2) family. As to quaternary structure, the complex is composed of two ATP-binding proteins (AraG), two transmembrane proteins (AraH) and a solute-binding protein (AraF).

It localises to the cell inner membrane. The catalysed reaction is L-arabinose(out) + ATP + H2O = L-arabinose(in) + ADP + phosphate + H(+). In terms of biological role, part of the ABC transporter complex AraFGH involved in arabinose import. Responsible for energy coupling to the transport system. This is Arabinose import ATP-binding protein AraG 1 from Burkholderia lata (strain ATCC 17760 / DSM 23089 / LMG 22485 / NCIMB 9086 / R18194 / 383).